The chain runs to 267 residues: N-formylglutamate deformylase (267 aa).

It belongs to the N-formylglutamate deformylase family. In terms of assembly, monomer.

The catalysed reaction is N-formyl-L-glutamate + H2O = formate + L-glutamate. It participates in amino-acid degradation; L-histidine degradation into L-glutamate; L-glutamate from N-formimidoyl-L-glutamate (deiminase route): step 2/2. Its activity is regulated as follows. Stimulated by Co(2+). Fe(2+) is also a good activator, particularly at lower concentrations, but it inhibits slightly the activity when used at concentrations over 0.1 mM. Other divalent metals tested (Cd(2+), Ca(2+), Mn(2+), Zn(2+), Ni(2+) and Mg(2+)) are not effective activators. Its function is as follows. Catalyzes the hydrolysis of N-formyl-L-glutamate to formate and L-glutamate. The sequence is that of N-formylglutamate deformylase from Pseudomonas putida (Arthrobacter siderocapsulatus).